Reading from the N-terminus, the 353-residue chain is Photosystem II protein D1 (353 aa).

At Thr2 the chain carries N-acetylthreonine. Residue Thr2 is modified to Phosphothreonine. The next 3 helical transmembrane spans lie at 29-46, 118-133, and 142-156; these read YIGW…TATS, HFLL…EWEL, and WIAV…AATA. His118 provides a ligand contact to chlorophyll a. Position 126 (Tyr126) interacts with pheophytin a. The [CaMn4O5] cluster site is built by Asp170 and Glu189. The helical transmembrane segment at 197–218 threads the bilayer; the sequence is FHMLGVAGVFGGSLFSAMHGSL. His198 provides a ligand contact to chlorophyll a. Residues His215 and 264–265 each bind a quinone; that span reads SF. Residue His215 participates in Fe cation binding. Position 272 (His272) interacts with Fe cation. Residues 274–288 form a helical membrane-spanning segment; sequence FLAAWPVVGIWFTAL. The [CaMn4O5] cluster site is built by His332, Glu333, Asp342, and Ala344. The propeptide occupies 345–353; that stretch reads AVEVPSING.

Belongs to the reaction center PufL/M/PsbA/D family. As to quaternary structure, PSII is composed of 1 copy each of membrane proteins PsbA, PsbB, PsbC, PsbD, PsbE, PsbF, PsbH, PsbI, PsbJ, PsbK, PsbL, PsbM, PsbT, PsbX, PsbY, PsbZ, Psb30/Ycf12, at least 3 peripheral proteins of the oxygen-evolving complex and a large number of cofactors. It forms dimeric complexes. Requires The D1/D2 heterodimer binds P680, chlorophylls that are the primary electron donor of PSII, and subsequent electron acceptors. It shares a non-heme iron and each subunit binds pheophytin, quinone, additional chlorophylls, carotenoids and lipids. D1 provides most of the ligands for the Mn4-Ca-O5 cluster of the oxygen-evolving complex (OEC). There is also a Cl(-1) ion associated with D1 and D2, which is required for oxygen evolution. The PSII complex binds additional chlorophylls, carotenoids and specific lipids. as cofactor. In terms of processing, tyr-161 forms a radical intermediate that is referred to as redox-active TyrZ, YZ or Y-Z. C-terminally processed by CTPA; processing is essential to allow assembly of the oxygen-evolving complex and thus photosynthetic growth.

It localises to the plastid. The protein localises to the chloroplast thylakoid membrane. The enzyme catalyses 2 a plastoquinone + 4 hnu + 2 H2O = 2 a plastoquinol + O2. Functionally, photosystem II (PSII) is a light-driven water:plastoquinone oxidoreductase that uses light energy to abstract electrons from H(2)O, generating O(2) and a proton gradient subsequently used for ATP formation. It consists of a core antenna complex that captures photons, and an electron transfer chain that converts photonic excitation into a charge separation. The D1/D2 (PsbA/PsbD) reaction center heterodimer binds P680, the primary electron donor of PSII as well as several subsequent electron acceptors. The polypeptide is Photosystem II protein D1 (Triticum aestivum (Wheat)).